Consider the following 144-residue polypeptide: Large ribosomal subunit protein uL11 (144 aa).

It belongs to the universal ribosomal protein uL11 family. In terms of assembly, part of the ribosomal stalk of the 50S ribosomal subunit. Interacts with L10 and the large rRNA to form the base of the stalk. L10 forms an elongated spine to which L12 dimers bind in a sequential fashion forming a multimeric L10(L12)X complex. In terms of processing, one or more lysine residues are methylated.

Its function is as follows. Forms part of the ribosomal stalk which helps the ribosome interact with GTP-bound translation factors. This Legionella pneumophila (strain Paris) protein is Large ribosomal subunit protein uL11.